The sequence spans 124 residues: Large ribosomal subunit protein bL12 (124 aa).

It belongs to the bacterial ribosomal protein bL12 family. In terms of assembly, homodimer. Part of the ribosomal stalk of the 50S ribosomal subunit. Forms a multimeric L10(L12)X complex, where L10 forms an elongated spine to which 2 to 4 L12 dimers bind in a sequential fashion. Binds GTP-bound translation factors.

In terms of biological role, forms part of the ribosomal stalk which helps the ribosome interact with GTP-bound translation factors. Is thus essential for accurate translation. The chain is Large ribosomal subunit protein bL12 from Brucella abortus (strain S19).